The chain runs to 138 residues: MRTLWIMAVLLVGVEGSVIELGKMILQETGKNPVTYYSAYGCNCGPLGRRKPLDATDRCCFMHKCCYKKLTDSNPIKDSYSYSWENKAIVCKEKNPRLKEMCECDKAVAICFRENMGTYNKKERINTKIFCKKTSEPC.

The first 16 residues, 1–16 (MRTLWIMAVLLVGVEG), serve as a signal peptide directing secretion. 6 disulfides stabilise this stretch: C42–C131, C44–C60, C59–C111, C65–C138, C66–C104, and C91–C102. An important for membrane-damaging activities in eukaryotes and bacteria; heparin-binding region spans residues 121–133 (KKERINTKIFCKK).

In terms of assembly, monomer. In terms of tissue distribution, expressed by the venom gland.

The protein resides in the secreted. In terms of biological role, snake venom phospholipase A2 homolog that lacks catalytic activity. It induces local edema. Is myotoxic. A model of myotoxic mechanism has been proposed: an apo Lys49-PLA2 is activated by the entrance of a hydrophobic molecule (e.g. fatty acid) at the hydrophobic channel of the protein leading to a reorientation of a monomer. This reorientation causes a transition between 'inactive' to 'active' states, causing alignment of C-terminal and membrane-docking sites (MDoS) side-by-side and putting the membrane-disruption sites (MDiS) in the same plane, exposed to solvent and in a symmetric position for both monomers. The MDoS region stabilizes the toxin on membrane by the interaction of charged residues with phospholipid head groups. Subsequently, the MDiS region destabilizes the membrane with penetration of hydrophobic residues. This insertion causes a disorganization of the membrane, allowing an uncontrolled influx of ions (i.e. calcium and sodium), and eventually triggering irreversible intracellular alterations and cell death. This Craspedocephalus borneensis (Borneo pit viper) protein is Basic phospholipase A2 homolog Tbo-K49.